The primary structure comprises 1192 residues: Protein argonaute 13 (1192 aa).

The PAZ domain maps to 183–296 (TVIQFVEEFL…LPMEVCKIVE (114 aa)). The Piwi domain maps to 472–770 (LLIVILLEVS…AASHAHCCIK (299 aa)).

This sequence belongs to the argonaute family. Ago subfamily.

Probably involved in the RNA silencing pathway. May bind to short RNAs such as microRNAs (miRNAs) or short interfering RNAs (siRNAs), and represses the translation of mRNAs which are complementary to them. The protein is Protein argonaute 13 (AGO13) of Oryza sativa subsp. japonica (Rice).